We begin with the raw amino-acid sequence, 153 residues long: Probable succinate transporter subunit YjjB (153 aa).

The next 4 membrane-spanning stretches (helical) occupy residues 7–27, 51–71, 83–103, and 125–145; these read WALL…AMVF, MIHF…MIGI, VFTV…TAMI, and FLKA…PGLW.

This sequence belongs to the ThrE exporter (TC 2.A.79) family. The transporter is composed of YjjB and YjjP.

It localises to the cell inner membrane. In terms of biological role, involved in succinate export with YjjP. Both proteins are required for export. This chain is Probable succinate transporter subunit YjjB, found in Yersinia pestis bv. Antiqua (strain Antiqua).